Consider the following 387-residue polypeptide: N-acetyldiaminopimelate deacetylase (387 aa).

Asp-75 is a catalytic residue. Glu-134 (proton acceptor) is an active-site residue.

It belongs to the peptidase M20A family. N-acetyldiaminopimelate deacetylase subfamily.

The catalysed reaction is N-acetyl-(2S,6S)-2,6-diaminopimelate + H2O = (2S,6S)-2,6-diaminopimelate + acetate. It functions in the pathway amino-acid biosynthesis; L-lysine biosynthesis via DAP pathway; LL-2,6-diaminopimelate from (S)-tetrahydrodipicolinate (acetylase route): step 3/3. In terms of biological role, catalyzes the conversion of N-acetyl-diaminopimelate to diaminopimelate and acetate. This chain is N-acetyldiaminopimelate deacetylase, found in Leuconostoc citreum (strain KM20).